We begin with the raw amino-acid sequence, 76 residues long: uncharacterized protein (76 aa).

This is an uncharacterized protein from Escherichia coli (strain K12).